The chain runs to 728 residues: Homoaconitase, mitochondrial (728 aa).

A mitochondrion-targeting transit peptide spans 1–24 (MVAIPRLARLSVPAWALSARGRFY). [4Fe-4S] cluster contacts are provided by C362, C422, and C425.

It belongs to the aconitase/IPM isomerase family. [4Fe-4S] cluster is required as a cofactor.

It is found in the mitochondrion. It catalyses the reaction (2R,3S)-homoisocitrate = cis-homoaconitate + H2O. It participates in amino-acid biosynthesis; L-lysine biosynthesis via AAA pathway; L-alpha-aminoadipate from 2-oxoglutarate: step 3/5. Catalyzes the reversible hydration of cis-homoaconitate to (2R,3S)-homoisocitrate, a step in the alpha-aminoadipate pathway for lysine biosynthesis. The polypeptide is Homoaconitase, mitochondrial (LYS4) (Cryptococcus neoformans var. neoformans serotype D (strain B-3501A) (Filobasidiella neoformans)).